The sequence spans 298 residues: ER-bound oxygenase mpaB (298 aa).

Topologically, residues 1 to 24 (MDKGTSFFTTPSFSATTRAIFNTM) are lumenal. The chain crosses the membrane as a helical span at residues 25–45 (PQWFSFAVGLLIAYPLLINSL). The Cytoplasmic segment spans residues 46 to 298 (RYRRLKQLQK…RLRKAMLYVE (253 aa)).

Belongs to the mpaB oxygenase family.

The protein localises to the endoplasmic reticulum membrane. It catalyses the reaction 4-farnesyl-3,5-dihydroxy-6-methylphthalide + AH2 + 2 O2 = (4E,8E)-10-(4,6-dihydroxy-7-methyl-3-oxo-1,3-dihydro-2-benzofuran-5-yl)-4,8-dimethyldeca-4,8-dienoate + acetone + A + H2O + H(+). It functions in the pathway secondary metabolite biosynthesis; terpenoid biosynthesis. Its function is as follows. ER-bound oxygenase; part of the gene cluster that mediates the biosynthesis of mycophenolic acid (MPA), the first isolated antibiotic natural product in the world obtained from a culture of Penicillium brevicompactum in 1893. MpaB catalyzes the oxidative cleavage the C19-C20 double bond in farnesyl-DHMP (FDHMP) to yield FDHMP-3C via a mycophenolic aldehyde intermediate. The first step of the pathway is the synthesis of 5-methylorsellinic acid (5MOA) by the cytosolic polyketide synthase mpaC. 5MOA is then converted to the phthalide compound 5,7-dihydroxy-4,6-dimethylphthalide (DHMP) by the endoplasmic reticulum-bound cytochrome P450 monooxygenase mpaDE. MpaDE first catalyzes hydroxylation of 5-MOA to 4,6-dihydroxy-2-(hydroxymethyl)-3-methylbenzoic acid (DHMB). MpaDE then acts as a lactone synthase that catalyzes the ring closure to convert DHMB into DHMP. The next step is the prenylation of DHMP by the Golgi apparatus-associated prenyltransferase mpaA to yield farnesyl-DHMP (FDHMP). The ER-bound oxygenase mpaB then mediates the oxidative cleavage the C19-C20 double bond in FDHMP to yield FDHMP-3C via a mycophenolic aldehyde intermediate. The O-methyltransferase mpaG catalyzes the methylation of FDHMP-3C to yield MFDHMP-3C. After the cytosolic methylation of FDHMP-3C, MFDHMP-3C enters into peroxisomes probably via free diffusion due to its low molecular weight. Upon a peroxisomal CoA ligation reaction, catalyzed by a beta-oxidation component enzyme acyl-CoA ligase ACL891, MFDHMP-3C-CoA would then be restricted to peroxisomes for the following beta-oxidation pathway steps. The peroxisomal beta-oxidation machinery than converts MFDHMP-3C-CoA into MPA_CoA, via a beta-oxidation chain-shortening process. Finally mpaH acts as a peroxisomal acyl-CoA hydrolase with high substrate specificity toward MPA-CoA to release the final product MPA. The sequence is that of ER-bound oxygenase mpaB from Penicillium roqueforti (strain FM164).